We begin with the raw amino-acid sequence, 760 residues long: Probable myosin-binding protein 4 (760 aa).

A helical membrane pass occupies residues 26–46 (WFLILLMFIDALLSYLLVWFA). Disordered stretches follow at residues 161 to 189 (SRGR…SLKK), 247 to 273 (SEKR…QPVL), 292 to 311 (SMLG…VKAK), and 348 to 595 (EAEV…KHSA). The span at 352–366 (SGSSSPSGGEFLSPS) shows a compositional bias: low complexity. The span at 371 to 383 (ASREIRIQEHDDS) shows a compositional bias: basic and acidic residues. Residues 385-394 (DFSQNITSSA) are compositionally biased toward polar residues. Residues 388–416 (QNITSSAMEIEEFEAAIEQKESDHMDVSG) are a coiled coil. Basic and acidic residues predominate over residues 404–413 (IEQKESDHMD). Composition is skewed to acidic residues over residues 446–458 (LEQE…ESEV) and 517–526 (EEDVDNEESE). Composition is skewed to basic and acidic residues over residues 537-550 (VKEE…HGDH) and 562-580 (SKEE…KITE). One can recognise a GTD-binding domain in the interval 611 to 709 (SLVEVLKQQL…DLEMELEYYR (99 aa)). A disordered region spans residues 725–760 (GILGNTEETNVTSPTDETSIKDSTDTKLTGSPSAEN). Composition is skewed to polar residues over residues 730–741 (TEETNVTSPTDE) and 750–760 (TKLTGSPSAEN).

The protein resides in the endomembrane system. Functionally, membrane-anchored myosin receptors that define a distinct, plant-specific transport vesicle compartment. The chain is Probable myosin-binding protein 4 from Arabidopsis thaliana (Mouse-ear cress).